A 217-amino-acid polypeptide reads, in one-letter code: Thiamine-phosphate synthase (217 aa).

Residues 39–43 and N71 each bind 4-amino-2-methyl-5-(diphosphooxymethyl)pyrimidine; that span reads QLRRK. Residues D72 and D91 each coordinate Mg(2+). A 4-amino-2-methyl-5-(diphosphooxymethyl)pyrimidine-binding site is contributed by S110. 137–139 contributes to the 2-[(2R,5Z)-2-carboxy-4-methylthiazol-5(2H)-ylidene]ethyl phosphate binding site; that stretch reads SPT. K140 provides a ligand contact to 4-amino-2-methyl-5-(diphosphooxymethyl)pyrimidine. Residues G173 and 193–194 contribute to the 2-[(2R,5Z)-2-carboxy-4-methylthiazol-5(2H)-ylidene]ethyl phosphate site; that span reads IS.

Belongs to the thiamine-phosphate synthase family. It depends on Mg(2+) as a cofactor.

The catalysed reaction is 2-[(2R,5Z)-2-carboxy-4-methylthiazol-5(2H)-ylidene]ethyl phosphate + 4-amino-2-methyl-5-(diphosphooxymethyl)pyrimidine + 2 H(+) = thiamine phosphate + CO2 + diphosphate. It carries out the reaction 2-(2-carboxy-4-methylthiazol-5-yl)ethyl phosphate + 4-amino-2-methyl-5-(diphosphooxymethyl)pyrimidine + 2 H(+) = thiamine phosphate + CO2 + diphosphate. It catalyses the reaction 4-methyl-5-(2-phosphooxyethyl)-thiazole + 4-amino-2-methyl-5-(diphosphooxymethyl)pyrimidine + H(+) = thiamine phosphate + diphosphate. It functions in the pathway cofactor biosynthesis; thiamine diphosphate biosynthesis; thiamine phosphate from 4-amino-2-methyl-5-diphosphomethylpyrimidine and 4-methyl-5-(2-phosphoethyl)-thiazole: step 1/1. Condenses 4-methyl-5-(beta-hydroxyethyl)thiazole monophosphate (THZ-P) and 2-methyl-4-amino-5-hydroxymethyl pyrimidine pyrophosphate (HMP-PP) to form thiamine monophosphate (TMP). The sequence is that of Thiamine-phosphate synthase from Bordetella bronchiseptica (strain ATCC BAA-588 / NCTC 13252 / RB50) (Alcaligenes bronchisepticus).